The primary structure comprises 83 residues: MASTPMGNEGEKKSSWPSQAAPSLRGGPASLSRSEEYLSQISAELMEEALCTACCHLNPVPIKKKQSQDQATQISKRAFFTKT.

The segment at 1-33 (MASTPMGNEGEKKSSWPSQAAPSLRGGPASLSR) is disordered.

This is Putative protein T-ENOL from Homo sapiens (Human).